Consider the following 397-residue polypeptide: Flavohemoprotein (397 aa).

The Globin domain maps to 4–140 (SFSPHTITLI…IANLLKDREA (137 aa)). Position 87 (histidine 87) interacts with heme b. Residues tyrosine 97 and glutamate 139 each act as charge relay system in the active site. Positions 151–397 (GGWIHWRRFV…FGPMDEEMAA (247 aa)) are reductase. An FAD-binding FR-type domain is found at 154–258 (IHWRRFVISK…TPPVGDFFLP (105 aa)). Residues tyrosine 192 and 207 to 210 (RNYS) contribute to the FAD site. 271–276 (GVGLTP) provides a ligand contact to NADP(+). FAD is bound at residue 387 to 390 (FFGP).

It belongs to the globin family. Two-domain flavohemoproteins subfamily. In the C-terminal section; belongs to the flavoprotein pyridine nucleotide cytochrome reductase family. Requires heme b as cofactor. The cofactor is FAD.

The enzyme catalyses 2 nitric oxide + NADPH + 2 O2 = 2 nitrate + NADP(+) + H(+). It catalyses the reaction 2 nitric oxide + NADH + 2 O2 = 2 nitrate + NAD(+) + H(+). In terms of biological role, is involved in NO detoxification in an aerobic process, termed nitric oxide dioxygenase (NOD) reaction that utilizes O(2) and NAD(P)H to convert NO to nitrate, which protects the bacterium from various noxious nitrogen compounds. Therefore, plays a central role in the inducible response to nitrosative stress. This Xylella fastidiosa (strain Temecula1 / ATCC 700964) protein is Flavohemoprotein.